The following is a 486-amino-acid chain: MTTLMVQGTTSDAGKSTLVTALCRWLTRQGVKVVPFKPQNMALNSAVTADGGEIGRAQAVQAQACFLAPHTDMNPVLLKPNSDTGAQVIIHGRAVTTMNAVAYHGYKEIAMQAVLESHRRLSESYPVIMVEGAGSPAEINLRANDIANMGFAEAVDCPVLLIADINRGGVFAHLVGTLELLSPSEQARVKGFIINRFRGDIALLQPGLDWLEARTGKPVVGVLPYVMDLHLEAEDGLDQRQTDKVEQVLNVVVPVLPRISNHTDFDPLRLHPQVNLQFIGPGQPIPPADLIILPGSKSVRSDLNYLRANGWETAIDRHLRYGGKLMGICGGLQMLGEHLHDPLGLEGAAGSSAGLGLLAMSTVLETEKQLRNVRGRLTLEDAEVSGYEIHAGVTTGAALEQAAVQLDDGRCDGAQSADGQILGTYLHGLFESPAACSALLRWAGLENVQSVDYHALRERDIERLADLVEKHLDGTLLRELCGLEAT.

One can recognise a GATase cobBQ-type domain in the interval 248 to 435; it reads VLNVVVPVLP…LHGLFESPAA (188 aa). The active-site Nucleophile is Cys329. His427 is an active-site residue.

This sequence belongs to the CobB/CobQ family. CobQ subfamily.

Its pathway is cofactor biosynthesis; adenosylcobalamin biosynthesis. Its function is as follows. Catalyzes amidations at positions B, D, E, and G on adenosylcobyrinic A,C-diamide. NH(2) groups are provided by glutamine, and one molecule of ATP is hydrogenolyzed for each amidation. The polypeptide is Cobyric acid synthase (Pseudomonas syringae pv. tomato (strain ATCC BAA-871 / DC3000)).